The following is a 439-amino-acid chain: 23S rRNA (uracil(1939)-C(5))-methyltransferase RlmD (439 aa).

The 54-residue stretch at 1–54 (MTAPVLIESLDQEGRGVAHAEGKVIFIEGALPGEVVTYNAYRRKPSFELAQVGQ) folds into the TRAM domain. C67, C73, C76, and C155 together coordinate [4Fe-4S] cluster. Residues Q264, F293, N298, E314, N342, and D363 each contribute to the S-adenosyl-L-methionine site. The Nucleophile role is filled by C391.

It belongs to the class I-like SAM-binding methyltransferase superfamily. RNA M5U methyltransferase family. RlmD subfamily.

The enzyme catalyses uridine(1939) in 23S rRNA + S-adenosyl-L-methionine = 5-methyluridine(1939) in 23S rRNA + S-adenosyl-L-homocysteine + H(+). Catalyzes the formation of 5-methyl-uridine at position 1939 (m5U1939) in 23S rRNA. The polypeptide is 23S rRNA (uracil(1939)-C(5))-methyltransferase RlmD (Nitrosospira multiformis (strain ATCC 25196 / NCIMB 11849 / C 71)).